The sequence spans 211 residues: Ribosomal RNA small subunit methyltransferase G (211 aa).

Residues Gly-73, 125-126 (IE), and Arg-141 each bind S-adenosyl-L-methionine.

The protein belongs to the methyltransferase superfamily. RNA methyltransferase RsmG family.

The protein localises to the cytoplasm. The catalysed reaction is guanosine(527) in 16S rRNA + S-adenosyl-L-methionine = N(7)-methylguanosine(527) in 16S rRNA + S-adenosyl-L-homocysteine. Its function is as follows. Specifically methylates the N7 position of guanine in position 527 of 16S rRNA. In Methylobacterium radiotolerans (strain ATCC 27329 / DSM 1819 / JCM 2831 / NBRC 15690 / NCIMB 10815 / 0-1), this protein is Ribosomal RNA small subunit methyltransferase G.